A 117-amino-acid chain; its full sequence is Acrylate reductase cytochrome subunit (117 aa).

Residues 1-22 (MKMYKLMLGLVLAGLVSLSAQA) form the signal peptide. Heme c is bound by residues H29, C37, C40, H41, C54, C57, H58, H79, H83, C90, C93, H94, H97, C104, C107, and H108.

As to quaternary structure, the ArdAB flavocytochrome c is composed of a FAD-containing subunit (ArdA) and a heme c-containing subunit (ArdB). Heme c is required as a cofactor.

It localises to the periplasm. Its activity is regulated as follows. Methacrylate acts as a competitive inhibitor of the acrylate reductase activity and suppresses the reductase activity in dose-dependent manner. Its function is as follows. Heme c-containing subunit of the ArdAB flavocytochrome c, which catalyzes the reduction of acrylate to propanoate and supports dimethylsulfoniopropionate-dependent anaerobic respiration. In vitro, can use the artificial electron donor methyl viologen. The natural electron donor is probably a low-potential cytochrome c. Also shows weak activity toward methacrylate in vitro (at a 22-fold lower rate) but cannot use other tested 2-enoates, including crotonic, fumaric, sorbic, urocanic, cinnamic, p-coumaric, caffeic or ferulic acids. The protein catalyzes a unidirectional reaction and cannot oxidize propanoate with phenazine metasulfate and dichlorophenolindophenol as electron acceptors. The polypeptide is Acrylate reductase cytochrome subunit (Shewanella woodyi (strain ATCC 51908 / MS32)).